The primary structure comprises 154 residues: Myoglobin (154 aa).

The Globin domain occupies 2 to 148 (GLSDGEWELV…FRNDIAAKYK (147 aa)). Residue S4 is modified to Phosphoserine. The residue at position 68 (T68) is a Phosphothreonine. Residue H94 participates in heme b binding.

The protein belongs to the globin family. In terms of assembly, monomeric.

It is found in the cytoplasm. It localises to the sarcoplasm. The enzyme catalyses Fe(III)-heme b-[protein] + nitric oxide + H2O = Fe(II)-heme b-[protein] + nitrite + 2 H(+). The catalysed reaction is H2O2 + AH2 = A + 2 H2O. In terms of biological role, monomeric heme protein which primary function is to store oxygen and facilitate its diffusion within muscle tissues. Reversibly binds oxygen through a pentacoordinated heme iron and enables its timely and efficient release as needed during periods of heightened demand. Depending on the oxidative conditions of tissues and cells, and in addition to its ability to bind oxygen, it also has a nitrite reductase activity whereby it regulates the production of bioactive nitric oxide. Under stress conditions, like hypoxia and anoxia, it also protects cells against reactive oxygen species thanks to its pseudoperoxidase activity. The chain is Myoglobin (MB) from Elephas maximus (Indian elephant).